We begin with the raw amino-acid sequence, 237 residues long: Trypsin-1 (237 aa).

In terms of domain architecture, Peptidase S1 spans 1–237 (IVGGTDAVLG…HVDWIKANAV (237 aa)). The cysteines at positions 30 and 46 are disulfide-linked. Residue His-45 is the Charge relay system of the active site. Residues Glu-64, Val-69, and Glu-74 each contribute to the Ca(2+) site. Asp-96 serves as the catalytic Charge relay system. 2 disulfide bridges follow: Cys-159–Cys-174 and Cys-185–Cys-213. The active-site Charge relay system is Ser-189.

The protein belongs to the peptidase S1 family. It depends on Ca(2+) as a cofactor.

The protein resides in the secreted. Its subcellular location is the extracellular space. It carries out the reaction Preferential cleavage: Arg-|-Xaa, Lys-|-Xaa.. This is Trypsin-1 from Astacus astacus (Noble crayfish).